Reading from the N-terminus, the 475-residue chain is Ribulose bisphosphate carboxylase large chain (475 aa).

Residues 1 to 2 constitute a propeptide that is removed on maturation; it reads MS. N-acetylproline is present on Pro3. Lys14 carries the post-translational modification N6,N6,N6-trimethyllysine. Substrate is bound by residues Asn123 and Thr173. Catalysis depends on Lys175, which acts as the Proton acceptor. Lys177 provides a ligand contact to substrate. Mg(2+) is bound by residues Lys201, Asp203, and Glu204. Position 201 is an N6-carboxylysine (Lys201). The active-site Proton acceptor is the His294. 3 residues coordinate substrate: Arg295, His327, and Ser379.

This sequence belongs to the RuBisCO large chain family. Type I subfamily. In terms of assembly, heterohexadecamer of 8 large chains and 8 small chains; disulfide-linked. The disulfide link is formed within the large subunit homodimers. Mg(2+) is required as a cofactor. The disulfide bond which can form in the large chain dimeric partners within the hexadecamer appears to be associated with oxidative stress and protein turnover.

It is found in the plastid. Its subcellular location is the chloroplast. The enzyme catalyses 2 (2R)-3-phosphoglycerate + 2 H(+) = D-ribulose 1,5-bisphosphate + CO2 + H2O. It catalyses the reaction D-ribulose 1,5-bisphosphate + O2 = 2-phosphoglycolate + (2R)-3-phosphoglycerate + 2 H(+). RuBisCO catalyzes two reactions: the carboxylation of D-ribulose 1,5-bisphosphate, the primary event in carbon dioxide fixation, as well as the oxidative fragmentation of the pentose substrate in the photorespiration process. Both reactions occur simultaneously and in competition at the same active site. The polypeptide is Ribulose bisphosphate carboxylase large chain (Fagopyrum esculentum subsp. ancestrale (Wild buckwheat)).